A 360-amino-acid chain; its full sequence is Histidinol-phosphate aminotransferase (360 aa).

N6-(pyridoxal phosphate)lysine is present on lysine 213.

The protein belongs to the class-II pyridoxal-phosphate-dependent aminotransferase family. Histidinol-phosphate aminotransferase subfamily. As to quaternary structure, homodimer. The cofactor is pyridoxal 5'-phosphate.

The enzyme catalyses L-histidinol phosphate + 2-oxoglutarate = 3-(imidazol-4-yl)-2-oxopropyl phosphate + L-glutamate. The protein operates within amino-acid biosynthesis; L-histidine biosynthesis; L-histidine from 5-phospho-alpha-D-ribose 1-diphosphate: step 7/9. This is Histidinol-phosphate aminotransferase from Baumannia cicadellinicola subsp. Homalodisca coagulata.